The chain runs to 294 residues: 4-hydroxy-tetrahydrodipicolinate synthase (294 aa).

T47 contributes to the pyruvate binding site. Catalysis depends on Y136, which acts as the Proton donor/acceptor. K164 (schiff-base intermediate with substrate) is an active-site residue. V206 lines the pyruvate pocket.

The protein belongs to the DapA family. In terms of assembly, homotetramer; dimer of dimers.

The protein localises to the cytoplasm. It carries out the reaction L-aspartate 4-semialdehyde + pyruvate = (2S,4S)-4-hydroxy-2,3,4,5-tetrahydrodipicolinate + H2O + H(+). It functions in the pathway amino-acid biosynthesis; L-lysine biosynthesis via DAP pathway; (S)-tetrahydrodipicolinate from L-aspartate: step 3/4. Functionally, catalyzes the condensation of (S)-aspartate-beta-semialdehyde [(S)-ASA] and pyruvate to 4-hydroxy-tetrahydrodipicolinate (HTPA). In Nostoc sp. (strain PCC 7120 / SAG 25.82 / UTEX 2576), this protein is 4-hydroxy-tetrahydrodipicolinate synthase.